The chain runs to 162 residues: Flagellar assembly factor FliW (162 aa).

This sequence belongs to the FliW family. In terms of assembly, interacts with translational regulator CsrA and flagellin(s).

It localises to the cytoplasm. Acts as an anti-CsrA protein, binds CsrA and prevents it from repressing translation of its target genes, one of which is flagellin. Binds to flagellin and participates in the assembly of the flagellum. The chain is Flagellar assembly factor FliW from Alkaliphilus metalliredigens (strain QYMF).